A 548-amino-acid polypeptide reads, in one-letter code: Frizzled-7 (548 aa).

A signal peptide spans M1–A19. Residues Q20–W230 are Extracellular-facing. The FZ domain occupies P31 to Q150. Intrachain disulfides connect C36/C97, C44/C90, C81/C118, C107/C147, and C111/C135. A glycan (N-linked (GlcNAc...) asparagine) is linked at N50. N-linked (GlcNAc...) asparagine glycosylation is present at N151. Residues V231 to V251 traverse the membrane as a helical segment. Residues D252 to P262 are Cytoplasmic-facing. The helical transmembrane segment at I263–L283 threads the bilayer. At E284 to C310 the chain is on the extracellular side. A helical membrane pass occupies residues T311–L331. Over S332 to Q353 the chain is Cytoplasmic. A helical transmembrane segment spans residues Y354–G374. The Extracellular segment spans residues Q375–G397. A helical membrane pass occupies residues F398 to F418. The Cytoplasmic portion of the chain corresponds to V419–R444. A helical membrane pass occupies residues I445–Y465. The Extracellular portion of the chain corresponds to E466–T502. Residues V503–W523 traverse the membrane as a helical segment. Over S524 to V548 the chain is Cytoplasmic. Positions K526–W531 match the Lys-Thr-X-X-X-Trp motif, mediates interaction with the PDZ domain of Dvl family members motif. A PDZ-binding motif is present at residues T546–V548.

This sequence belongs to the G-protein coupled receptor Fz/Smo family. As to quaternary structure, interacts with wnt11 and sdc4. The extracellular domain interacts with the extracellular domain of pcdh8/papc.

The protein localises to the cell membrane. Its subcellular location is the endosome membrane. In terms of biological role, receptor for Wnt proteins. Acts in both canonical and non-canonical Wnt pathways. Although different papers report differing Wnt preferences, wnt5a, wnt8b and wnt11 have been proposed as synergists. In the canonical Wnt pathway, acts via beta-catenin to promote the expression of the dorsal genes siamois, twin and nodal3 and to establish the dorsal axis of the embryo and induce dorsal mesoderm formation. In a non-canonical Wnt/planar cell polarity (PCP) pathway, acts with sdc4 and dvl2/dsh to regulate convergent extension movements in gastrulation. Triggers phosphorylation of dvl2/dsh and its translocation to the plasma membrane. In a third branch of Wnt signaling, acts in a non-canonical pathway via trimeric G proteins, and independently of dvl2/dsh, to recruit protein kinase C (PKC) to the membrane and thus activate PKC. PKC signaling controls cell sorting and tissue separation during gastrulation. The sequence is that of Frizzled-7 from Xenopus tropicalis (Western clawed frog).